A 355-amino-acid chain; its full sequence is S-adenosylmethionine:tRNA ribosyltransferase-isomerase (355 aa).

The protein belongs to the QueA family. As to quaternary structure, monomer.

Its subcellular location is the cytoplasm. The enzyme catalyses 7-aminomethyl-7-carbaguanosine(34) in tRNA + S-adenosyl-L-methionine = epoxyqueuosine(34) in tRNA + adenine + L-methionine + 2 H(+). It functions in the pathway tRNA modification; tRNA-queuosine biosynthesis. Transfers and isomerizes the ribose moiety from AdoMet to the 7-aminomethyl group of 7-deazaguanine (preQ1-tRNA) to give epoxyqueuosine (oQ-tRNA). This chain is S-adenosylmethionine:tRNA ribosyltransferase-isomerase, found in Photorhabdus laumondii subsp. laumondii (strain DSM 15139 / CIP 105565 / TT01) (Photorhabdus luminescens subsp. laumondii).